The following is a 441-amino-acid chain: ATP-dependent protease ATPase subunit HslU (441 aa).

ATP contacts are provided by residues isoleucine 18, 60–65 (GVGKTE), aspartate 254, glutamate 319, and arginine 391.

Belongs to the ClpX chaperone family. HslU subfamily. In terms of assembly, a double ring-shaped homohexamer of HslV is capped on each side by a ring-shaped HslU homohexamer. The assembly of the HslU/HslV complex is dependent on binding of ATP.

Its subcellular location is the cytoplasm. In terms of biological role, ATPase subunit of a proteasome-like degradation complex; this subunit has chaperone activity. The binding of ATP and its subsequent hydrolysis by HslU are essential for unfolding of protein substrates subsequently hydrolyzed by HslV. HslU recognizes the N-terminal part of its protein substrates and unfolds these before they are guided to HslV for hydrolysis. This Shewanella frigidimarina (strain NCIMB 400) protein is ATP-dependent protease ATPase subunit HslU.